The primary structure comprises 330 residues: Ketol-acid reductoisomerase (NADP(+)) (330 aa).

One can recognise a KARI N-terminal Rossmann domain in the interval 3–184 (LPVYYDKDID…GGGRMGVLKT (182 aa)). Residues 26–29 (YGAQ), Ser52, and Ser54 contribute to the NADP(+) site. His109 is a catalytic residue. An NADP(+)-binding site is contributed by Gly135. One can recognise a KARI C-terminal knotted domain in the interval 185-329 (SFKEECESDL…EILRAPFNHK (145 aa)). Mg(2+) is bound by residues Asp193, Glu197, Glu229, and Glu233. Ser254 lines the substrate pocket.

The protein belongs to the ketol-acid reductoisomerase family. Requires Mg(2+) as cofactor.

The enzyme catalyses (2R)-2,3-dihydroxy-3-methylbutanoate + NADP(+) = (2S)-2-acetolactate + NADPH + H(+). The catalysed reaction is (2R,3R)-2,3-dihydroxy-3-methylpentanoate + NADP(+) = (S)-2-ethyl-2-hydroxy-3-oxobutanoate + NADPH + H(+). It participates in amino-acid biosynthesis; L-isoleucine biosynthesis; L-isoleucine from 2-oxobutanoate: step 2/4. Its pathway is amino-acid biosynthesis; L-valine biosynthesis; L-valine from pyruvate: step 2/4. Involved in the biosynthesis of branched-chain amino acids (BCAA). Catalyzes an alkyl-migration followed by a ketol-acid reduction of (S)-2-acetolactate (S2AL) to yield (R)-2,3-dihydroxy-isovalerate. In the isomerase reaction, S2AL is rearranged via a Mg-dependent methyl migration to produce 3-hydroxy-3-methyl-2-ketobutyrate (HMKB). In the reductase reaction, this 2-ketoacid undergoes a metal-dependent reduction by NADPH to yield (R)-2,3-dihydroxy-isovalerate. This is Ketol-acid reductoisomerase (NADP(+)) from Helicobacter pylori (strain HPAG1).